Consider the following 325-residue polypeptide: Beta-ketoacyl-[acyl-carrier-protein] synthase III (325 aa).

Residues C119 and H252 contribute to the active site. The interval Q253–R257 is ACP-binding. Residue N282 is part of the active site.

This sequence belongs to the thiolase-like superfamily. FabH family. In terms of assembly, homodimer.

Its subcellular location is the cytoplasm. It catalyses the reaction malonyl-[ACP] + acetyl-CoA + H(+) = 3-oxobutanoyl-[ACP] + CO2 + CoA. Its pathway is lipid metabolism; fatty acid biosynthesis. In terms of biological role, catalyzes the condensation reaction of fatty acid synthesis by the addition to an acyl acceptor of two carbons from malonyl-ACP. Catalyzes the first condensation reaction which initiates fatty acid synthesis and may therefore play a role in governing the total rate of fatty acid production. Possesses both acetoacetyl-ACP synthase and acetyl transacylase activities. Its substrate specificity determines the biosynthesis of branched-chain and/or straight-chain of fatty acids. In Polaromonas sp. (strain JS666 / ATCC BAA-500), this protein is Beta-ketoacyl-[acyl-carrier-protein] synthase III.